A 406-amino-acid polypeptide reads, in one-letter code: NAC transcription factor NAM-1 (406 aa).

Over residues 1–11 the composition is skewed to polar residues; that stretch reads MGSPDSSSGSA. The tract at residues 1–40 is disordered; that stretch reads MGSPDSSSGSAQKPPRHQHQHQPPPPRRQGSAPELPPGFR. Residues 35–204 enclose the NAC domain; sequence LPPGFRFHPT…DWVLCRIYKK (170 aa). A DNA-binding region spans residues 137–210; the sequence is VGVKKALVFY…IYKKTSKAAA (74 aa).

The protein resides in the nucleus. Its function is as follows. Transcription factor of the NAC family associated with the grain protein content (GPC). Accelerates senescence and increases nutrient remobilization from leaves to developing grains. Sequences of 11 European varieties of H.vulgare tested belongs to the same haplotype while the sequence found in H.spontaneum, an ancestor of the cultivated H.vulgare which has a higher GPC, belongs to an other haplotype. The sequence is that of NAC transcription factor NAM-1 (NAM-1) from Hordeum vulgare subsp. vulgare (Domesticated barley).